The chain runs to 336 residues: Probable allantoicase (336 aa).

The protein belongs to the allantoicase family.

It carries out the reaction allantoate + H2O = (S)-ureidoglycolate + urea. Its pathway is nitrogen metabolism; (S)-allantoin degradation; (S)-ureidoglycolate from allantoate (aminidohydrolase route): step 1/1. The chain is Probable allantoicase from Acinetobacter baumannii (strain SDF).